The chain runs to 180 residues: UPF0303 protein PSEEN3311 (180 aa).

The protein belongs to the UPF0303 family.

The chain is UPF0303 protein PSEEN3311 from Pseudomonas entomophila (strain L48).